A 376-amino-acid polypeptide reads, in one-letter code: 3-aminomethylindole N-methyltransferase (376 aa).

Positions 220, 243, 263, and 264 each coordinate S-adenosyl-L-homocysteine.

This sequence belongs to the class I-like SAM-binding methyltransferase superfamily. Cation-independent O-methyltransferase family. As to expression, more present in the fifth leaf than in the second leaf (at protein level).

It catalyses the reaction 3-(aminomethyl)indole + 2 S-adenosyl-L-methionine = gramine + 2 S-adenosyl-L-homocysteine + 2 H(+). It functions in the pathway alkaloid biosynthesis. Its activity is regulated as follows. Repressed by sodium carbonate, sodium bicarbonate and K-phosphate. Methylates 3-aminomethylindole (AMI) and N-methyl-3-aminomethylindole (MAMI), two substrates involved in gramine biosynthesis, a toxic indole alkaloid. Can use S-adenosyl-L-methionine (AdoMet) as a methyl donor. Unable to mediate caffeic acid O-methylation. The chain is 3-aminomethylindole N-methyltransferase from Hordeum vulgare subsp. vulgare (Domesticated barley).